The sequence spans 392 residues: Formate-dependent phosphoribosylglycinamide formyltransferase (392 aa).

Residues 22-23 (EL) and Glu82 contribute to the N(1)-(5-phospho-beta-D-ribosyl)glycinamide site. ATP contacts are provided by residues Arg114, Lys155, 160-165 (SSGKGQ), 195-198 (EGVV), and Glu203. The ATP-grasp domain occupies 119-308 (RLAAEELQLP…EFALHVRAFL (190 aa)). Mg(2+) is bound by residues Glu267 and Glu279. Residues Asp286, Lys355, and 362-363 (RR) each bind N(1)-(5-phospho-beta-D-ribosyl)glycinamide.

Belongs to the PurK/PurT family. As to quaternary structure, homodimer.

The catalysed reaction is N(1)-(5-phospho-beta-D-ribosyl)glycinamide + formate + ATP = N(2)-formyl-N(1)-(5-phospho-beta-D-ribosyl)glycinamide + ADP + phosphate + H(+). The protein operates within purine metabolism; IMP biosynthesis via de novo pathway; N(2)-formyl-N(1)-(5-phospho-D-ribosyl)glycinamide from N(1)-(5-phospho-D-ribosyl)glycinamide (formate route): step 1/1. Involved in the de novo purine biosynthesis. Catalyzes the transfer of formate to 5-phospho-ribosyl-glycinamide (GAR), producing 5-phospho-ribosyl-N-formylglycinamide (FGAR). Formate is provided by PurU via hydrolysis of 10-formyl-tetrahydrofolate. The protein is Formate-dependent phosphoribosylglycinamide formyltransferase of Shigella boydii serotype 4 (strain Sb227).